Consider the following 349-residue polypeptide: Core protein VP7 (349 aa).

N-linked (GlcNAc...) asparagine; by host glycosylation occurs at Asn45.

This sequence belongs to the orbivirus VP7 family. In terms of assembly, homotrimer.

It localises to the virion. Functionally, major structural core protein; binds to structural protein VP3. Constitutes the surface of the AHSV core. This African horse sickness virus 6 (AHSV-6) protein is Core protein VP7 (Segment-7).